A 235-amino-acid polypeptide reads, in one-letter code: Ion-translocating oxidoreductase complex subunit E (235 aa).

Transmembrane regions (helical) follow at residues 63–83 (LGLG…ISLF), 93–113 (IPIY…LMNA), 117–137 (TLYQ…IIIG), 152–172 (IWDG…LGAL), and 206–226 (SFLL…LLAI).

The protein belongs to the NqrDE/RnfAE family. The complex is composed of six subunits: RnfA, RnfB, RnfC, RnfD, RnfE and RnfG.

It is found in the cell inner membrane. Its function is as follows. Part of a membrane-bound complex that couples electron transfer with translocation of ions across the membrane. In Haemophilus influenzae (strain ATCC 51907 / DSM 11121 / KW20 / Rd), this protein is Ion-translocating oxidoreductase complex subunit E.